We begin with the raw amino-acid sequence, 259 residues long: Hemin import ATP-binding protein HmuV (259 aa).

The ABC transporter domain occupies 2 to 238; the sequence is IEARDLNVSI…ALLSEVFDCQ (237 aa). 34 to 41 provides a ligand contact to ATP; the sequence is GPNGSGKS.

The protein belongs to the ABC transporter superfamily. Heme (hemin) importer (TC 3.A.1.14.5) family. As to quaternary structure, the complex is composed of two ATP-binding proteins (HmuV), two transmembrane proteins (HmuU) and a solute-binding protein (HmuT).

The protein localises to the cell inner membrane. Functionally, part of the ABC transporter complex HmuTUV involved in hemin import. Responsible for energy coupling to the transport system. This Chelativorans sp. (strain BNC1) protein is Hemin import ATP-binding protein HmuV.